The sequence spans 340 residues: Conidiation-specific protein 13 (340 aa).

The tract at residues 313 to 340 (AEAAAGISSGKPAADRKTKGKKGTKFRV) is disordered. The segment covering 330–340 (TKGKKGTKFRV) has biased composition (basic residues).

The chain is Conidiation-specific protein 13 (con-13) from Neurospora crassa (strain ATCC 24698 / 74-OR23-1A / CBS 708.71 / DSM 1257 / FGSC 987).